Consider the following 1255-residue polypeptide: DNA-directed RNA polymerase subunit beta' (1255 aa).

Residues Cys-68, Cys-70, Cys-83, and Cys-86 each contribute to the Zn(2+) site. The Mg(2+) site is built by Asp-457, Asp-459, and Asp-461. 4 residues coordinate Zn(2+): Cys-803, Cys-885, Cys-892, and Cys-895. The segment covering 1220 to 1240 (NSDEEVSFTEDEYFEDEENDL) has biased composition (acidic residues). The interval 1220–1255 (NSDEEVSFTEDEYFEDEENDLSTENFDDLKFSEEEE) is disordered. Over residues 1246-1255 (DDLKFSEEEE) the composition is skewed to basic and acidic residues.

Belongs to the RNA polymerase beta' chain family. In terms of assembly, the RNAP catalytic core consists of 2 alpha, 1 beta, 1 beta' and 1 omega subunit. When a sigma factor is associated with the core the holoenzyme is formed, which can initiate transcription. The cofactor is Mg(2+). Zn(2+) is required as a cofactor.

The catalysed reaction is RNA(n) + a ribonucleoside 5'-triphosphate = RNA(n+1) + diphosphate. In terms of biological role, DNA-dependent RNA polymerase catalyzes the transcription of DNA into RNA using the four ribonucleoside triphosphates as substrates. The polypeptide is DNA-directed RNA polymerase subunit beta' (Lachnoclostridium phytofermentans (strain ATCC 700394 / DSM 18823 / ISDg) (Clostridium phytofermentans)).